A 426-amino-acid polypeptide reads, in one-letter code: Dihydroorotase (426 aa).

Positions 62 and 64 each coordinate Zn(2+). Residues 64–66 and Asn-96 contribute to the substrate site; that span reads HLR. Zn(2+)-binding residues include Asp-154, His-181, His-234, and Asp-307. Asp-307 is an active-site residue. His-311 contributes to the substrate binding site.

Belongs to the metallo-dependent hydrolases superfamily. DHOase family. Class I DHOase subfamily. It depends on Zn(2+) as a cofactor.

It carries out the reaction (S)-dihydroorotate + H2O = N-carbamoyl-L-aspartate + H(+). It functions in the pathway pyrimidine metabolism; UMP biosynthesis via de novo pathway; (S)-dihydroorotate from bicarbonate: step 3/3. Functionally, catalyzes the reversible cyclization of carbamoyl aspartate to dihydroorotate. The polypeptide is Dihydroorotase (Syntrophus aciditrophicus (strain SB)).